The primary structure comprises 109 residues: Cell cycle protein GpsB (109 aa).

Positions 36-63 (IKDYETYAALVKSLRQEIADLKEELTRK) form a coiled coil.

This sequence belongs to the GpsB family. Forms polymers through the coiled coil domains. Interacts with PBP1, MreC and EzrA.

The protein resides in the cytoplasm. Divisome component that associates with the complex late in its assembly, after the Z-ring is formed, and is dependent on DivIC and PBP2B for its recruitment to the divisome. Together with EzrA, is a key component of the system that regulates PBP1 localization during cell cycle progression. Its main role could be the removal of PBP1 from the cell pole after pole maturation is completed. Also contributes to the recruitment of PBP1 to the division complex. Not essential for septum formation. The sequence is that of Cell cycle protein GpsB from Streptococcus pneumoniae serotype 4 (strain ATCC BAA-334 / TIGR4).